Reading from the N-terminus, the 781-residue chain is Toll-like receptor 2 type-2 (781 aa).

The first 24 residues, 1-24 (MHTWKMWAICTALAAHLPEEQALR), serve as a signal peptide directing secretion. At 25 to 585 (QACLSCDATQ…QLSLMECHRS (561 aa)) the chain is on the extracellular side. A disulfide bond links C30 and C36. N-linked (GlcNAc...) asparagine glycosylation is present at N37. 6 LRR repeats span residues 53-74 (KITV…DLQK), 77-98 (NLRT…SFGS), 101-122 (KLEL…WFGP), 125-146 (SLQH…SPFS), 150-171 (NLSS…NFEG), and 174-195 (FLNT…SLKS). N-linked (GlcNAc...) asparagine glycosylation is present at N109. Residues N150, N184, N301, and N313 are each glycosylated (N-linked (GlcNAc...) asparagine). C350 and C379 form a disulfide bridge. LRR repeat units follow at residues 358 to 378 (SLEY…EHSA), 385 to 406 (SLQT…GKSL), 411 to 432 (NLNL…CEWP), 434 to 455 (NLKY…IPST), 456 to 474 (LEVL…LQLP), 475 to 496 (FLKE…TDIP), and 497 to 518 (NLVA…EFES). N-linked (GlcNAc...) asparagine glycosylation occurs at N390. Cysteines 429 and 451 form a disulfide. N-linked (GlcNAc...) asparagine glycosylation is present at N439. Residues 530-584 (NNFICSCEFLSFIHHEAGIAQVLVGWPESYICDSPLTVRGAQVGSVQLSLMECHR) form the LRRCT domain. Residues 586–606 (LLVSLICTLVFLFILILVVVG) form a helical membrane-spanning segment. Topologically, residues 607–781 (YKYHAVWYMR…WENLKAALKS (175 aa)) are cytoplasmic. The region spanning 636-779 (ICYDAFVSYS…MFWENLKAAL (144 aa)) is the TIR domain.

The protein belongs to the Toll-like receptor family. As to quaternary structure, binds MYD88 (via TIR domain). In terms of processing, N-glycosylated. In terms of tissue distribution, highly expressed in ovary. Also detected in brain, heart, lung, liver, spleen and kidney, and at low levels in gizzard, muscle, testis and proventriculus.

The protein localises to the membrane. Functionally, participates in the innate immune response to microbial agents. Acts via MYD88 and TRAF6, leading to NF-kappa-B activation, cytokine secretion and the inflammatory response. Mediates the response to mycoplasmal macrophage-activating lipopeptide-2kD (MALP-2). This is Toll-like receptor 2 type-2 (TLR2-2) from Gallus gallus (Chicken).